We begin with the raw amino-acid sequence, 276 residues long: MFVPFLIMLREGLEAALIVSLIASYLKRTQRGMXDCVMWIGVLLAAALCLGLGIFINETTGEFPQKEQELFEGIVAVIAVVILTWMVFWMRKVSRNVKVQLEQAVDSALQRGNHHGWALVMMVFFAVAREGLESVFFLLAAFQQDVGIWPPLGAMLGLATAVVLGFLLYWGGIRLNLGAFFKWTSLFILFVAAGLAAGAIRAFHEAGLWNHFQEIAFDMSAVLSTHSLFGTLMEGIFGYQEAPSVSEVAVWFIYLIPALVAFALPPRAGATASRSA.

Met-1 is a topological domain (periplasmic). Residues 2 to 22 (FVPFLIMLREGLEAALIVSLI) form a helical membrane-spanning segment. Topologically, residues 23–35 (ASYLKRTQRGMXD) are cytoplasmic. The chain crosses the membrane as a helical span at residues 36–56 (CVMWIGVLLAAALCLGLGIFI). Topologically, residues 57–69 (NETTGEFPQKEQE) are periplasmic. Residues 70–90 (LFEGIVAVIAVVILTWMVFWM) form a helical membrane-spanning segment. The Cytoplasmic segment spans residues 91–118 (RKVSRNVKVQLEQAVDSALQRGNHHGWA). The helical transmembrane segment at 119–139 (LVMMVFFAVAREGLESVFFLL) threads the bilayer. The Periplasmic segment spans residues 140–147 (AAFQQDVG). Residues 148 to 168 (IWPPLGAMLGLATAVVLGFLL) traverse the membrane as a helical segment. The Cytoplasmic segment spans residues 169 to 179 (YWGGIRLNLGA). A helical membrane pass occupies residues 180 to 200 (FFKWTSLFILFVAAGLAAGAI). The Periplasmic portion of the chain corresponds to 201–244 (RAFHEAGLWNHFQEIAFDMSAVLSTHSLFGTLMEGIFGYQEAPS). Residues 245 to 265 (VSEVAVWFIYLIPALVAFALP) traverse the membrane as a helical segment. Residues 266–276 (PRAGATASRSA) are Cytoplasmic-facing.

This sequence belongs to the oxidase-dependent Fe transporter (OFeT) (TC 9.A.10.1) family. In terms of assembly, part of a ferrous iron transporter composed of EfeU, EfeO and EfeB. However, this EfeUOB tripartite iron transporter is defective in E.coli strain K12 due to a frameshift mutation in EfeU.

It localises to the cell inner membrane. This Escherichia coli (strain K12) protein is Putative inactive ferrous iron permease EfeU (efeU).